A 187-amino-acid polypeptide reads, in one-letter code: High-affinity copper transporter ctrA2 (187 aa).

The next 2 membrane-spanning stretches (helical) occupy residues 44-64 (YAGTCIFLVVLAIINRCLVAF) and 137-157 (AAIFLCITGVSYLLMLAVMTM).

The protein belongs to the copper transporter (Ctr) (TC 1.A.56) family. SLC31A subfamily.

The protein localises to the cell membrane. The enzyme catalyses Cu(2+)(in) = Cu(2+)(out). Its function is as follows. High-affinity copper transporter of plasma membrane that mediates copper uptake under low copper conditions. The mechanism driving the transmembrane transport of copper has still to be determined. Acts as a potential virulence factor. The chain is High-affinity copper transporter ctrA2 from Aspergillus fumigatus (strain ATCC MYA-4609 / CBS 101355 / FGSC A1100 / Af293) (Neosartorya fumigata).